A 424-amino-acid chain; its full sequence is 3-ketoacyl-CoA thiolase, peroxisomal (424 aa).

The N-terminal 26 residues, 1–26, are a transit peptide targeting the peroxisome; that stretch reads MQRLQVVLGHLRGPADSGWMPQAAPC. The tract at residues 1–26 is PTS2-type peroxisomal targeting signal; sequence MQRLQVVLGHLRGPADSGWMPQAAPC. Phosphothreonine occurs at positions 59 and 60. Cys-123 serves as the catalytic Acyl-thioester intermediate. Residues His-377 and Cys-408 each act as proton acceptor in the active site.

This sequence belongs to the thiolase-like superfamily. Thiolase family. Homodimer. Interacts (via PTS2-type peroxisomal targeting signal region) with PEX7; leading to its translocation into peroxisomes.

It localises to the peroxisome. It carries out the reaction an acyl-CoA + acetyl-CoA = a 3-oxoacyl-CoA + CoA. The catalysed reaction is 2 acetyl-CoA = acetoacetyl-CoA + CoA. It catalyses the reaction tetradecanoyl-CoA + acetyl-CoA = 3-oxohexadecanoyl-CoA + CoA. The enzyme catalyses hexanoyl-CoA + acetyl-CoA = 3-oxooctanoyl-CoA + CoA. It carries out the reaction 3-oxohexadecanedioyl-CoA + CoA = tetradecanedioyl-CoA + acetyl-CoA. The catalysed reaction is 3-oxo-(6Z,9Z,12Z,15Z,18Z,21Z)-tetracosahexaenoyl-CoA + CoA = (4Z,7Z,10Z,13Z,16Z,19Z)-docosahexaenoyl-CoA + acetyl-CoA. It participates in lipid metabolism; peroxisomal fatty acid beta-oxidation. Functionally, responsible for the thiolytic cleavage of straight chain 3-keto fatty acyl-CoAs (3-oxoacyl-CoAs). Plays an important role in fatty acid peroxisomal beta-oxidation. Catalyzes the cleavage of short, medium, long, and very long straight chain 3-oxoacyl-CoAs. In Homo sapiens (Human), this protein is 3-ketoacyl-CoA thiolase, peroxisomal.